We begin with the raw amino-acid sequence, 234 residues long: Sugar fermentation stimulation protein A (234 aa).

The segment at residues 201–220 is a DNA-binding region (H-T-H motif); it reads LLSEAQNKGVEVLAYKAELS.

It belongs to the SfsA family.

Functionally, binds to DNA non-specifically. Could be a regulatory factor involved in maltose metabolism. This Salmonella gallinarum (strain 287/91 / NCTC 13346) protein is Sugar fermentation stimulation protein A.